An 879-amino-acid polypeptide reads, in one-letter code: MHPFSRLFRNIQSLGEEEVQELLGPPEDALPLLAGEDLNHRVADALNLHLPTADLQWVHKTNAITGLYSNQAAQFNPHWIQPEFPELHLHNELIKKLQQYFGPLTINEKRKLQLNFPARFFPKATKYFPLIKGIKNNYPNFALEHFFATANYLWTLWEAGILYLRKNQTTLTFKGKPYSWEHRQLVQHNGQQHKSHLQSRQNSSVVACSGHLLHNHLPSEPVSVSTRNLSNNIFGKSQNSTRTGLCSHKQIQTDRLEHLARISCRSKTTIGQQGSSPKISSNFRNQTWAYNSSWNSGHTTWFSSASNSNKSRSREKAYSSNSTSKRYSPPLNYEKSDFSSPGVRGRIKRLDNNGTPTQCLWRSFYDTKPCGSYCIHHIVSSIDDWGPCTVTGDVTIKSPRTPRRITGGVFLVDKNPNNSSESRLVVDFSQFSRGHTRVHWPKFAVPNLQTLANLLSTDLQWLSLDVSAAFYHIPISPAAVPHLLVGSPGLERFNTCLSYSTHNRNDSQLQTMHNLCTRHVYSSLLLLFKTYGRKLHLLAHPFIMGFRKLPMGVGLSPFLLAQFTSALASMVRRNFPHCVVFAYMDDLVLGARTSEHLTAIYTHICSVFLDLGIHLNVNKTKWWGNHLHFMGYVITSSGVLPQDKHVKKLSRYLRSVPVNQPLDYKICERLTDILNYVAPFTLCGYAALMPLYHAIASRTAFVFSSLYKSWLLSLYEELWPVVRQRGVVCSVFADATPTGWGIATTCQLLSGTFAFPLPIATAELIAACLARCWTGARLLGTDNSVVLSGKLTSFPWLLACVANWILRGTSFCYVPSALNPADLPSRGLLPVLRPLPRLRFRPPTSRISLWAASPPVSPRRPVRVAWSSPVQNCEPWIPP.

The interval Met-1 to Gln-184 is terminal protein domain (TP). The spacer stretch occupies residues Leu-185–Ile-382. A disordered region spans residues Ser-304 to Gly-345. The interval Asp-383–Gln-724 is polymerase/reverse transcriptase domain (RT). In terms of domain architecture, Reverse transcriptase spans Asp-393–Ile-634. Residues Asp-465, Asp-585, and Asp-586 each contribute to the Mg(2+) site.

This sequence belongs to the hepadnaviridae P protein family.

The catalysed reaction is DNA(n) + a 2'-deoxyribonucleoside 5'-triphosphate = DNA(n+1) + diphosphate. The enzyme catalyses Endonucleolytic cleavage to 5'-phosphomonoester.. With respect to regulation, activated by host HSP70 and HSP40 in vitro to be able to bind the epsilon loop of the pgRNA. Because deletion of the RNase H region renders the protein partly chaperone-independent, the chaperones may be needed indirectly to relieve occlusion of the RNA-binding site by this domain. Inhibited by several reverse-transcriptase inhibitors: Lamivudine, Adefovir and Entecavir. Multifunctional enzyme that converts the viral RNA genome into dsDNA in viral cytoplasmic capsids. This enzyme displays a DNA polymerase activity that can copy either DNA or RNA templates, and a ribonuclease H (RNase H) activity that cleaves the RNA strand of RNA-DNA heteroduplexes in a partially processive 3'- to 5'-endonucleasic mode. Neo-synthesized pregenomic RNA (pgRNA) are encapsidated together with the P protein, and reverse-transcribed inside the nucleocapsid. Initiation of reverse-transcription occurs first by binding the epsilon loop on the pgRNA genome, and is initiated by protein priming, thereby the 5'-end of (-)DNA is covalently linked to P protein. Partial (+)DNA is synthesized from the (-)DNA template and generates the relaxed circular DNA (RC-DNA) genome. After budding and infection, the RC-DNA migrates in the nucleus, and is converted into a plasmid-like covalently closed circular DNA (cccDNA). The activity of P protein does not seem to be necessary for cccDNA generation, and is presumably released from (+)DNA by host nuclear DNA repair machinery. The chain is Protein P from Woodchuck hepatitis B virus (isolate 1) (WHV).